A 278-amino-acid chain; its full sequence is Mediator of RNA polymerase II transcription subunit 18 (278 aa).

Belongs to the Mediator complex subunit 18 family. In terms of assembly, component of the Mediator complex.

Its subcellular location is the nucleus. Functionally, component of the Mediator complex, a coactivator involved in the regulated transcription of nearly all RNA polymerase II-dependent genes. Mediator functions as a bridge to convey information from gene-specific regulatory proteins to the basal RNA polymerase II transcription machinery. Mediator is recruited to promoters by direct interactions with regulatory proteins and serves as a scaffold for the assembly of a functional preinitiation complex with RNA polymerase II and the general transcription factors. In Aspergillus clavatus (strain ATCC 1007 / CBS 513.65 / DSM 816 / NCTC 3887 / NRRL 1 / QM 1276 / 107), this protein is Mediator of RNA polymerase II transcription subunit 18 (srb5).